Reading from the N-terminus, the 353-residue chain is MEKLDRLLERIEPASKDWEAKAWERLHAQIRPRDSLGRLEVIAARLAAIKRSLTPAVGRKIIFTMAGDHGVAAEGVSAYPQEVTAQMVGSFVRGWASINILAVHCGAAVRVVDCGVASDLPPDWPVLRRKLGKGTANIAVGPAMSREVAVRGLTIGAEIVQDAHLKEGYLLFGTGDMGIGNTTPSTAIIAALGGKPVRDLTGRGTGIDDVAFERKVRVIERALAVNRPDPNDPLGVLAGVGGFEIAALGGAVLGAAALRVPIICDGFIATAGALVACRLAPKAADYLFVSHRSREVGHTAMVDMLGMRPILDLDMRLGEGTGSALAMNIVEAAAKVLVECKTFEEAGVTDTGH.

Glu319 (proton acceptor) is an active-site residue.

It belongs to the CobT family.

It carries out the reaction 5,6-dimethylbenzimidazole + nicotinate beta-D-ribonucleotide = alpha-ribazole 5'-phosphate + nicotinate + H(+). The protein operates within nucleoside biosynthesis; alpha-ribazole biosynthesis; alpha-ribazole from 5,6-dimethylbenzimidazole: step 1/2. Catalyzes the synthesis of alpha-ribazole-5'-phosphate from nicotinate mononucleotide (NAMN) and 5,6-dimethylbenzimidazole (DMB). In Syntrophobacter fumaroxidans (strain DSM 10017 / MPOB), this protein is Nicotinate-nucleotide--dimethylbenzimidazole phosphoribosyltransferase.